Consider the following 366-residue polypeptide: Galactoside alpha-(1,2)-fucosyltransferase 1 (366 aa).

The Cytoplasmic portion of the chain corresponds to 1 to 8 (MWPLSHRH). A helical; Signal-anchor for type II membrane protein transmembrane segment spans residues 9-25 (LCLAFLLVCVLSAISFF). Topologically, residues 26–366 (LHIHQDSIRH…LSPLWTLAEP (341 aa)) are lumenal. N-linked (GlcNAc...) asparagine glycans are attached at residues N66, N302, and N328.

It belongs to the glycosyltransferase 11 family.

It is found in the golgi apparatus. It localises to the golgi stack membrane. It carries out the reaction a beta-D-galactosyl-(1-&gt;4)-N-acetyl-beta-D-glucosaminyl derivative + GDP-beta-L-fucose = an alpha-L-Fuc-(1-&gt;2)-beta-D-Gal-(1-&gt;4)-beta-D-GlcNAc derivative + GDP + H(+). It catalyses the reaction a ganglioside GA1 + GDP-beta-L-fucose = a ganglioside Fuc-GA1 + GDP + H(+). The enzyme catalyses a beta-D-Gal-(1-&gt;3)-beta-D-GlcNAc-(1-&gt;3)-beta-D-Gal-(1-&gt;4)-beta-D-Glc-(1&lt;-&gt;1')-Cer(d18:1(4E)) + GDP-beta-L-fucose = alpha-L-fucosyl-(1-&gt;2)- beta-D-galactosyl-(1-&gt;3)-N-acetyl-beta-D-glucosaminyl-(1-&gt;3)-beta-D-galactosyl-(1-&gt;4)-beta-D-glucosyl-(1&lt;-&gt;1')-N-acylsphing-4-enine + GDP + H(+). The catalysed reaction is a neolactoside nLc4Cer(d18:1(4E)) + GDP-beta-L-fucose = a neolactoside IV(2)-alpha-Fuc-nLc4Cer(d18:1(4E)) + GDP + H(+). It carries out the reaction a ganglioside GM1 + GDP-beta-L-fucose = a ganglioside Fuc-GM1 + GDP + H(+). It catalyses the reaction beta-D-galactosyl-(1-&gt;3)-N-acetyl-D-galactosamine + GDP-beta-L-fucose = alpha-L-fucosyl-(1-&gt;2)-beta-D-galactosyl-(1-&gt;3)-N-acetyl-D-galactosamine + GDP + H(+). Its pathway is protein modification; protein glycosylation. Its function is as follows. Catalyzes the transfer of L-fucose, from a guanosine diphosphate-beta-L-fucose, to the terminal galactose residue of glycoconjugates through an alpha(1,2) linkage leading to H antigen synthesis that is an intermediate substrate in the synthesis of ABO blood group antigens. H antigen is essential for maturation of the glomerular layer of the main olfactory bulb, in cell migration and early cell-cell contacts during tumor associated angiogenesis. Preferentially fucosylates soluble lactose and to a lesser extent fucosylates glycolipids gangliosides GA1 and GM1a. In Aotus nancymaae (Ma's night monkey), this protein is Galactoside alpha-(1,2)-fucosyltransferase 1.